The sequence spans 89 residues: Small ribosomal subunit protein uS15 (89 aa).

Belongs to the universal ribosomal protein uS15 family. In terms of assembly, part of the 30S ribosomal subunit. Forms a bridge to the 50S subunit in the 70S ribosome, contacting the 23S rRNA.

Functionally, one of the primary rRNA binding proteins, it binds directly to 16S rRNA where it helps nucleate assembly of the platform of the 30S subunit by binding and bridging several RNA helices of the 16S rRNA. Forms an intersubunit bridge (bridge B4) with the 23S rRNA of the 50S subunit in the ribosome. The protein is Small ribosomal subunit protein uS15 of Coxiella burnetii (strain CbuK_Q154) (Coxiella burnetii (strain Q154)).